A 55-amino-acid chain; its full sequence is Ribosome modulation factor (55 aa).

Belongs to the ribosome modulation factor family. Associates exclusively with 100S ribosomes.

It localises to the cytoplasm. Its function is as follows. During stationary phase, converts 70S ribosomes to an inactive dimeric form (100S ribosomes). May form immature 90S particles, which are converted to mature 100S ribosomes by the hibernation promoting factor Hpf. This chain is Ribosome modulation factor, found in Escherichia coli O157:H7.